A 180-amino-acid polypeptide reads, in one-letter code: MYHVIAATTNPAKINAITLAFDDVYGPGQYRIEGVNVDSGVPLQPIGSTETRIGARQRVKNARQVRPEADFWVGIEAGIEDNMTFAWMVIEHLQARGESRSASLMLPDIILQGIRQGRELGDEMAVLSGISNVKQQGGAIGIFTQGKLTRTSVYHQALLLALVPFHNEIYQRPSPSKPAI.

8-13 (TTNPAK) is a binding site for substrate. 2 residues coordinate Mg(2+): D38 and E68. 68-69 (EA) lines the substrate pocket.

It belongs to the YjjX NTPase family. In terms of assembly, homodimer. Mg(2+) is required as a cofactor. The cofactor is Mn(2+).

The enzyme catalyses XTP + H2O = XDP + phosphate + H(+). It carries out the reaction ITP + H2O = IDP + phosphate + H(+). Its function is as follows. Phosphatase that hydrolyzes non-canonical purine nucleotides such as XTP and ITP to their respective diphosphate derivatives. Probably excludes non-canonical purines from DNA/RNA precursor pool, thus preventing their incorporation into DNA/RNA and avoiding chromosomal lesions. This Yersinia pseudotuberculosis serotype IB (strain PB1/+) protein is Inosine/xanthosine triphosphatase.